The chain runs to 141 residues: Large ribosomal subunit protein uL11 (141 aa).

This sequence belongs to the universal ribosomal protein uL11 family. As to quaternary structure, part of the ribosomal stalk of the 50S ribosomal subunit. Interacts with L10 and the large rRNA to form the base of the stalk. L10 forms an elongated spine to which L12 dimers bind in a sequential fashion forming a multimeric L10(L12)X complex. In terms of processing, one or more lysine residues are methylated.

In terms of biological role, forms part of the ribosomal stalk which helps the ribosome interact with GTP-bound translation factors. In Coprothermobacter proteolyticus (strain ATCC 35245 / DSM 5265 / OCM 4 / BT), this protein is Large ribosomal subunit protein uL11.